The chain runs to 691 residues: Elongation factor G (691 aa).

Residues 8 to 283 (KKVRNIGIAA…AVVAYLPAPD (276 aa)) form the tr-type G domain. GTP contacts are provided by residues 17–24 (AHIDAGKT), 81–85 (DTPGH), and 135–138 (NKMD).

It belongs to the TRAFAC class translation factor GTPase superfamily. Classic translation factor GTPase family. EF-G/EF-2 subfamily.

The protein localises to the cytoplasm. In terms of biological role, catalyzes the GTP-dependent ribosomal translocation step during translation elongation. During this step, the ribosome changes from the pre-translocational (PRE) to the post-translocational (POST) state as the newly formed A-site-bound peptidyl-tRNA and P-site-bound deacylated tRNA move to the P and E sites, respectively. Catalyzes the coordinated movement of the two tRNA molecules, the mRNA and conformational changes in the ribosome. This is Elongation factor G from Campylobacter jejuni subsp. jejuni serotype O:6 (strain 81116 / NCTC 11828).